The sequence spans 640 residues: Threonine--tRNA ligase (640 aa).

Residues Met1–Thr61 enclose the TGS domain. The tract at residues Asp243–Pro534 is catalytic. Zn(2+) contacts are provided by Cys334, His385, and His511.

Belongs to the class-II aminoacyl-tRNA synthetase family. Homodimer. It depends on Zn(2+) as a cofactor.

It is found in the cytoplasm. The enzyme catalyses tRNA(Thr) + L-threonine + ATP = L-threonyl-tRNA(Thr) + AMP + diphosphate + H(+). Its function is as follows. Catalyzes the attachment of threonine to tRNA(Thr) in a two-step reaction: L-threonine is first activated by ATP to form Thr-AMP and then transferred to the acceptor end of tRNA(Thr). Also edits incorrectly charged L-seryl-tRNA(Thr). This Dichelobacter nodosus (strain VCS1703A) protein is Threonine--tRNA ligase.